A 503-amino-acid chain; its full sequence is MTEMVISPAERQSIRRLPFSFANRFKLVLDWNEDFSQASIYYLAPLSMEALVETKRVVKHAFQLIELSQAEFESKLTQVYQRDSSEARQLMEDIGADSDDFFSLAEELPQNEDLLESEDDAPIIKLINAMLGEAIKEGASDIHIETFEKTLSIRFRVDGVLREVLAPSRKLSSLLVSRVKVMAKLDIAEKRVPQDGRISLRIGGRAVDVRVSTMPSSHGERVVMRLLDKNATRLDLHSLGMTAHNHDNFRRLIKRPHGIILVTGPTGSGKSTTLYAGLQELNSSERNILTVEDPIEFDIDGIGQTQVNPRVDMTFARGLRAILRQDPDVVMVGEIRDLETAQIAVQASLTGHLVMSTLHTNTAVGAVTRLRDMGIEPFLISSSLLGVLAQRLVRTLCPDCKEPYEADKEQRKLFDSKKKEPLILYRATGCPKCNHKGYRGRTGIHELLLVDDALQELIHSEAGEQAMEKHIRATTPSIRDDGLDKVRQGITSLEEVMRVTKES.

Zn(2+) is bound by residues Cys-397, Cys-400, Cys-430, and Cys-433.

Belongs to the GSP E family. As to quaternary structure, forms homooligomers; most probably hexamers. Interacts with EpsL/GspL. Zn(2+) is required as a cofactor.

It localises to the cell inner membrane. It carries out the reaction ATP + H2O + cellular proteinSide 1 = ADP + phosphate + cellular proteinSide 2.. ATPase component of the type II secretion system required for the energy-dependent secretion of extracellular factors such as proteases and toxins from the periplasm. Acts as a molecular motor to provide the energy that is required for assembly of the pseudopilus and the extrusion of substrates generated in the cytoplasm. The polypeptide is Type II secretion system ATPase E (epsE) (Vibrio cholerae serotype O1 (strain ATCC 39315 / El Tor Inaba N16961)).